Reading from the N-terminus, the 739-residue chain is Phosphoribosylformylglycinamidine synthase subunit PurL (739 aa).

The active site involves H54. Residues Y57 and K96 each contribute to the ATP site. E98 contacts Mg(2+). Residues 99-102 (SHNH) and R121 contribute to the substrate site. H100 functions as the Proton acceptor in the catalytic mechanism. D122 contributes to the Mg(2+) binding site. Q245 is a binding site for substrate. Mg(2+) is bound at residue D273. Substrate is bound at residue 317-319 (ESQ). D500 and G537 together coordinate ATP. N538 contributes to the Mg(2+) binding site. Substrate is bound at residue S540.

It belongs to the FGAMS family. Monomer. Part of the FGAM synthase complex composed of 1 PurL, 1 PurQ and 2 PurS subunits.

The protein resides in the cytoplasm. The catalysed reaction is N(2)-formyl-N(1)-(5-phospho-beta-D-ribosyl)glycinamide + L-glutamine + ATP + H2O = 2-formamido-N(1)-(5-O-phospho-beta-D-ribosyl)acetamidine + L-glutamate + ADP + phosphate + H(+). The protein operates within purine metabolism; IMP biosynthesis via de novo pathway; 5-amino-1-(5-phospho-D-ribosyl)imidazole from N(2)-formyl-N(1)-(5-phospho-D-ribosyl)glycinamide: step 1/2. Its function is as follows. Part of the phosphoribosylformylglycinamidine synthase complex involved in the purines biosynthetic pathway. Catalyzes the ATP-dependent conversion of formylglycinamide ribonucleotide (FGAR) and glutamine to yield formylglycinamidine ribonucleotide (FGAM) and glutamate. The FGAM synthase complex is composed of three subunits. PurQ produces an ammonia molecule by converting glutamine to glutamate. PurL transfers the ammonia molecule to FGAR to form FGAM in an ATP-dependent manner. PurS interacts with PurQ and PurL and is thought to assist in the transfer of the ammonia molecule from PurQ to PurL. The chain is Phosphoribosylformylglycinamidine synthase subunit PurL from Bacillus cytotoxicus (strain DSM 22905 / CIP 110041 / 391-98 / NVH 391-98).